A 184-amino-acid chain; its full sequence is Large ribosomal subunit protein uL5 (184 aa).

This sequence belongs to the universal ribosomal protein uL5 family. In terms of assembly, part of the 50S ribosomal subunit; part of the 5S rRNA/L5/L18/L25 subcomplex. Contacts the 5S rRNA and the P site tRNA. Forms a bridge to the 30S subunit in the 70S ribosome.

This is one of the proteins that bind and probably mediate the attachment of the 5S RNA into the large ribosomal subunit, where it forms part of the central protuberance. In the 70S ribosome it contacts protein S13 of the 30S subunit (bridge B1b), connecting the 2 subunits; this bridge is implicated in subunit movement. Contacts the P site tRNA; the 5S rRNA and some of its associated proteins might help stabilize positioning of ribosome-bound tRNAs. The chain is Large ribosomal subunit protein uL5 from Thermotoga sp. (strain RQ2).